A 292-amino-acid chain; its full sequence is Porphobilinogen deaminase (292 aa).

S-(dipyrrolylmethanemethyl)cysteine is present on Cys236.

This sequence belongs to the HMBS family. In terms of assembly, monomer. The cofactor is dipyrromethane.

It carries out the reaction 4 porphobilinogen + H2O = hydroxymethylbilane + 4 NH4(+). Its pathway is porphyrin-containing compound metabolism; protoporphyrin-IX biosynthesis; coproporphyrinogen-III from 5-aminolevulinate: step 2/4. In terms of biological role, tetrapolymerization of the monopyrrole PBG into the hydroxymethylbilane pre-uroporphyrinogen in several discrete steps. The polypeptide is Porphobilinogen deaminase (Wolbachia sp. subsp. Drosophila simulans (strain wRi)).